Reading from the N-terminus, the 556-residue chain is Arginine--tRNA ligase (556 aa).

Residues 132-142 (ANPTGDLHLGH) carry the 'HIGH' region motif.

This sequence belongs to the class-I aminoacyl-tRNA synthetase family. As to quaternary structure, monomer.

It is found in the cytoplasm. It catalyses the reaction tRNA(Arg) + L-arginine + ATP = L-arginyl-tRNA(Arg) + AMP + diphosphate. The chain is Arginine--tRNA ligase from Listeria monocytogenes serotype 4a (strain HCC23).